A 417-amino-acid chain; its full sequence is Gamma-glutamyl phosphate reductase (417 aa).

Belongs to the gamma-glutamyl phosphate reductase family.

It localises to the cytoplasm. It carries out the reaction L-glutamate 5-semialdehyde + phosphate + NADP(+) = L-glutamyl 5-phosphate + NADPH + H(+). Its pathway is amino-acid biosynthesis; L-proline biosynthesis; L-glutamate 5-semialdehyde from L-glutamate: step 2/2. Catalyzes the NADPH-dependent reduction of L-glutamate 5-phosphate into L-glutamate 5-semialdehyde and phosphate. The product spontaneously undergoes cyclization to form 1-pyrroline-5-carboxylate. The chain is Gamma-glutamyl phosphate reductase from Proteus mirabilis (strain HI4320).